The primary structure comprises 22 residues: C-type natriuretic peptide (22 aa).

Cys-6 and Cys-22 form a disulfide bridge.

It belongs to the natriuretic peptide family.

It localises to the secreted. Functionally, hormone which plays a role in endochondral ossification through regulation of cartilaginous growth plate chondrocytes proliferation and differentiation. May also be vasoactive and natriuretic. Specifically binds and stimulates the cGMP production of the NPR2 receptor. Binds the clearance receptor NPR3. The polypeptide is C-type natriuretic peptide (NPPC) (Gallus gallus (Chicken)).